A 476-amino-acid polypeptide reads, in one-letter code: Replication factor C large subunit (476 aa).

50–57 provides a ligand contact to ATP; the sequence is GPPGVGKT. The tract at residues 447–476 is disordered; the sequence is YEKGTKKGKGEKRRKGSDEGSGLLKWLKKD. Positions 452–461 are enriched in basic residues; sequence KKGKGEKRRK.

It belongs to the activator 1 small subunits family. RfcL subfamily. Heteromultimer composed of small subunits (RfcS) and large subunits (RfcL).

In terms of biological role, part of the RFC clamp loader complex which loads the PCNA sliding clamp onto DNA. The chain is Replication factor C large subunit from Ignicoccus hospitalis (strain KIN4/I / DSM 18386 / JCM 14125).